The following is a 280-amino-acid chain: Polyamine aminopropyltransferase (280 aa).

A PABS domain is found at 2–235 (GGWIDEEHRG…GWWSWTFAAV (234 aa)). Residue Gln-29 participates in S-methyl-5'-thioadenosine binding. The spermidine site is built by His-60 and Asp-84. S-methyl-5'-thioadenosine contacts are provided by residues Glu-104 and 136 to 137 (DG). The Proton acceptor role is filled by Asp-155. S-methyl-5'-thioadenosine is bound at residue Pro-162.

This sequence belongs to the spermidine/spermine synthase family. As to quaternary structure, homodimer or homotetramer.

The protein resides in the cytoplasm. The catalysed reaction is S-adenosyl 3-(methylsulfanyl)propylamine + putrescine = S-methyl-5'-thioadenosine + spermidine + H(+). Its pathway is amine and polyamine biosynthesis; spermidine biosynthesis; spermidine from putrescine: step 1/1. Catalyzes the irreversible transfer of a propylamine group from the amino donor S-adenosylmethioninamine (decarboxy-AdoMet) to putrescine (1,4-diaminobutane) to yield spermidine. The polypeptide is Polyamine aminopropyltransferase (Parasynechococcus marenigrum (strain WH8102)).